The following is a 443-amino-acid chain: Glutamate--tRNA ligase 2 (443 aa).

The short motif at Pro7–Asn17 is the 'HIGH' region element. A 'KMSKS' region motif is present at residues Lys236–Arg240. Lys239 contacts ATP.

It belongs to the class-I aminoacyl-tRNA synthetase family. Glutamate--tRNA ligase type 1 subfamily. Monomer.

The protein localises to the cytoplasm. It catalyses the reaction tRNA(Glu) + L-glutamate + ATP = L-glutamyl-tRNA(Glu) + AMP + diphosphate. Functionally, catalyzes the attachment of glutamate to tRNA(Glu) in a two-step reaction: glutamate is first activated by ATP to form Glu-AMP and then transferred to the acceptor end of tRNA(Glu). In Ehrlichia canis (strain Jake), this protein is Glutamate--tRNA ligase 2.